A 78-amino-acid polypeptide reads, in one-letter code: Acyl carrier protein (78 aa).

Residues 2 to 77 (SDIASRVKAI…QAISYIEEAK (76 aa)) form the Carrier domain. Ser37 is modified (O-(pantetheine 4'-phosphoryl)serine).

Belongs to the acyl carrier protein (ACP) family. Post-translationally, 4'-phosphopantetheine is transferred from CoA to a specific serine of apo-ACP by AcpS. This modification is essential for activity because fatty acids are bound in thioester linkage to the sulfhydryl of the prosthetic group.

Its subcellular location is the cytoplasm. Its pathway is lipid metabolism; fatty acid biosynthesis. Functionally, carrier of the growing fatty acid chain in fatty acid biosynthesis. In Flavobacterium johnsoniae (strain ATCC 17061 / DSM 2064 / JCM 8514 / BCRC 14874 / CCUG 350202 / NBRC 14942 / NCIMB 11054 / UW101) (Cytophaga johnsonae), this protein is Acyl carrier protein.